The chain runs to 467 residues: Nuclear distribution protein PAC1 (467 aa).

Residues 62-96 adopt a coiled-coil conformation; the sequence is GSIIRLQRAITKLEQKCDALQQELDDKTKQLETIV. WD repeat units follow at residues 121 to 160, 164 to 212, 219 to 262, 264 to 302, 325 to 365, 385 to 424, and 426 to 466; these read QNESPVTAIKLHPSLAIVYVGTDTGRLIAYDILNYTIPLA, AHSK…GELK, AHDS…QSFS, HSEWVKSIDVLDEYILSGSLDSTLRLTHWPSGNGLSVGT, PYRD…LKPN, GHTSWVKDLKLRGDHLFSCSDDETIKCWDLNTGNCVKTWS, and IHNN…VKII.

The protein belongs to the WD repeat LIS1/nudF family. Self-associates. Interacts with NDL1 and dynein.

The protein localises to the cytoplasm. It localises to the cytoskeleton. It is found in the spindle pole. Functionally, positively regulates the activity of the minus-end directed microtubule motor protein dynein. Plays a central role in positioning the mitotic spindle at the bud neck during cell division. Targets cytoplasmic dynein to microtubule plus ends, thereby promoting dynein-mediated microtubule sliding along the bud cortex and consequently the movement of the mitotic spindle to the bud neck. This is Nuclear distribution protein PAC1 from Candida glabrata (strain ATCC 2001 / BCRC 20586 / JCM 3761 / NBRC 0622 / NRRL Y-65 / CBS 138) (Yeast).